Here is a 375-residue protein sequence, read N- to C-terminus: Queuine tRNA-ribosyltransferase (375 aa).

The active-site Proton acceptor is Asp-89. Residues 89–93 (DSGGF), Asp-143, Gln-187, and Gly-214 each bind substrate. Residues 245-251 (GVGKPED) are RNA binding. Asp-264 acts as the Nucleophile in catalysis. The RNA binding; important for wobble base 34 recognition stretch occupies residues 269 to 273 (TRNAR). Positions 302, 304, 307, and 333 each coordinate Zn(2+).

The protein belongs to the queuine tRNA-ribosyltransferase family. As to quaternary structure, homodimer. Within each dimer, one monomer is responsible for RNA recognition and catalysis, while the other monomer binds to the replacement base PreQ1. The cofactor is Zn(2+).

It carries out the reaction 7-aminomethyl-7-carbaguanine + guanosine(34) in tRNA = 7-aminomethyl-7-carbaguanosine(34) in tRNA + guanine. Its pathway is tRNA modification; tRNA-queuosine biosynthesis. Catalyzes the base-exchange of a guanine (G) residue with the queuine precursor 7-aminomethyl-7-deazaguanine (PreQ1) at position 34 (anticodon wobble position) in tRNAs with GU(N) anticodons (tRNA-Asp, -Asn, -His and -Tyr). Catalysis occurs through a double-displacement mechanism. The nucleophile active site attacks the C1' of nucleotide 34 to detach the guanine base from the RNA, forming a covalent enzyme-RNA intermediate. The proton acceptor active site deprotonates the incoming PreQ1, allowing a nucleophilic attack on the C1' of the ribose to form the product. After dissociation, two additional enzymatic reactions on the tRNA convert PreQ1 to queuine (Q), resulting in the hypermodified nucleoside queuosine (7-(((4,5-cis-dihydroxy-2-cyclopenten-1-yl)amino)methyl)-7-deazaguanosine). The sequence is that of Queuine tRNA-ribosyltransferase from Salmonella choleraesuis (strain SC-B67).